A 459-amino-acid polypeptide reads, in one-letter code: uncharacterized protein (459 aa).

The TRAM domain maps to 5 to 63; sequence PVEEGQKFPLTIRRMGINGEGIGYFKKAVVFVPGAITGEEVVVEAVKVRDRFTEAKLNK. 4 residues coordinate [4Fe-4S] cluster: cysteine 76, cysteine 82, cysteine 85, and cysteine 166. Residues glutamine 290, tyrosine 319, aspartate 340, and aspartate 388 each contribute to the S-adenosyl-L-methionine site. Cysteine 415 (nucleophile) is an active-site residue.

The protein belongs to the class I-like SAM-binding methyltransferase superfamily. RNA M5U methyltransferase family.

This is an uncharacterized protein from Listeria monocytogenes serotype 4b (strain F2365).